Consider the following 185-residue polypeptide: PXMP2/4 family protein 4 (185 aa).

The next 3 helical transmembrane spans lie at 63–83, 100–120, and 141–161; these read MAVF…KYLD, IDQV…MGIL, and VSDC…ISSI.

Belongs to the peroxisomal membrane protein PXMP2/4 family.

Its subcellular location is the membrane. This is PXMP2/4 family protein 4 from Dictyostelium discoideum (Social amoeba).